Reading from the N-terminus, the 217-residue chain is 2-C-methyl-D-erythritol 4-phosphate cytidylyltransferase (217 aa).

Belongs to the IspD/TarI cytidylyltransferase family. IspD subfamily.

It carries out the reaction 2-C-methyl-D-erythritol 4-phosphate + CTP + H(+) = 4-CDP-2-C-methyl-D-erythritol + diphosphate. The protein operates within isoprenoid biosynthesis; isopentenyl diphosphate biosynthesis via DXP pathway; isopentenyl diphosphate from 1-deoxy-D-xylulose 5-phosphate: step 2/6. In terms of biological role, catalyzes the formation of 4-diphosphocytidyl-2-C-methyl-D-erythritol from CTP and 2-C-methyl-D-erythritol 4-phosphate (MEP). The protein is 2-C-methyl-D-erythritol 4-phosphate cytidylyltransferase of Chlamydia abortus (strain DSM 27085 / S26/3) (Chlamydophila abortus).